A 223-amino-acid chain; its full sequence is GrpE protein homolog, mitochondrial (223 aa).

It belongs to the GrpE family. In terms of assembly, component of the PAM complex, at least composed of mtHsp70, mge1, tim44, pam16, pam17 and pam18.

It localises to the mitochondrion matrix. Its function is as follows. Essential component of the PAM complex, a complex required for the translocation of transit peptide-containing proteins from the inner membrane into the mitochondrial matrix in an ATP-dependent manner. Seems to control the nucleotide-dependent binding of ssc1 to substrate proteins. This Schizosaccharomyces pombe (strain 972 / ATCC 24843) (Fission yeast) protein is GrpE protein homolog, mitochondrial (mge1).